Consider the following 71-residue polypeptide: Small ribosomal subunit protein bS18 (71 aa).

It belongs to the bacterial ribosomal protein bS18 family. In terms of assembly, part of the 30S ribosomal subunit. Forms a tight heterodimer with protein bS6.

Binds as a heterodimer with protein bS6 to the central domain of the 16S rRNA, where it helps stabilize the platform of the 30S subunit. The polypeptide is Small ribosomal subunit protein bS18 (Synechocystis sp. (strain ATCC 27184 / PCC 6803 / Kazusa)).